We begin with the raw amino-acid sequence, 715 residues long: MSQVMSSPLLAGGHAVSLAPCDEPRRTLHPAPSPSLPPQCSYYTTEGWGAQALMAPVPCMGPPGRLQQAPQVEAKATCFLPSPGEKALGTPEDLDSYIDFSLESLNQMILELDPTFQLLPPGTGGSQAELAQSTMSMRKKEESEALDIKYIEVTSARSRCHDGPQHCSSPSVTPPFGSLRSGGLLLSRDVPRETRSSSESLIFSGNQGRGHQRPLPPSEGLSPRPPNSPSISIPCMGSKASSPHGLGSPLVASPRLEKRLGGLAPQRGSRISVLSASPVSDVSYMFGSSQSLLHSSNSSHQSSSRSLESPANSSSSLHSLGSVSLCTRPSDFQAPRNPTLTMGQPRTPHSPPLAKEHASSCPPSITNSMVDIPIVLINGCPEPGSSPPQRTPGHQNSVQPGAASPSNPCPATRSNSQTLSDAPFTTCPEGPARDMQPTMKFVMDTSKYWFKPNITREQAIELLRKEEPGAFVIRDSSSYRGSFGLALKVQEVPASAQSRPGEDSNDLIRHFLIESSAKGVHLKGADEEPYFGSLSAFVCQHSIMALALPCKLTIPQRELGGADGASDSTDSPASCQKKSAGCHTLYLSSVSVETLTGALAVQKAISTTFERDILPTPTVVHFKVTEQGITLTDVQRKVFFRRHYPLTTLRFCGMDPEQRKWQKYCKPSWIFGFVAKSQTEPQENVCHLFAEYDMVQPASQVIGLVTALLQDAERM.

The signal sequence occupies residues 1–18 (MSQVMSSPLLAGGHAVSL). Serine 82 is subject to Phosphoserine. 4 disordered regions span residues 159–183 (RCHD…RSGG), 195–251 (RSSS…SPLV), 291–364 (SLLH…CPPS), and 376–435 (LING…ARDM). The segment covering 197-206 (SSESLIFSGN) has biased composition (polar residues). Serine 248 is modified (phosphoserine). The segment covering 291–325 (SLLHSSNSSHQSSSRSLESPANSSSSLHSLGSVSL) has biased composition (low complexity). Residues 449–556 (WFKPNITREQ…ALPCKLTIPQ (108 aa)) enclose the SH2 domain. One can recognise a PTB domain in the interval 582 to 705 (CHTLYLSSVS…QPASQVIGLV (124 aa)).

It belongs to the PTEN phosphatase protein family. Interacts (via SH2 domain) with Rho GTPase-activating protein DLC1 (via C-terminus); the interaction is independent of DLC1 tyrosine phosphorylation. Interacts with integrin ITGB1; the interaction displaces tensin TNS3 from the ITGB1 cytoplasmic tail and promotes ITGB1 stability. Interacts (via SH2 domain) with E3 ubiquitin-protein ligase CBL (phosphorylated on 'Tyr-774'); the interaction is enhanced in the presence of EGF and reduces interaction of CBL with EGFR. Interacts (via SH2 domain) with receptor tyrosine kinase MET (when phosphorylated); the interaction increases MET protein stability. Proteolytically cleaved by caspase-3 during apoptosis. In terms of tissue distribution, expressed at low levels in colon (at protein level). Expressed in prostate and placenta.

The protein resides in the cell junction. It localises to the focal adhesion. It is found in the cytoplasm. The protein localises to the cytoskeleton. Functionally, promotes EGF-induced cell migration by displacing tensin TNS3 from the cytoplasmic tail of integrin ITGB1 which results in dissociation of TNS3 from focal adhesions, disassembly of actin stress fibers and initiation of cell migration. Suppresses ligand-induced degradation of EGFR by reducing EGFR ubiquitination in the presence of EGF. Increases MET protein stability by inhibiting MET endocytosis and subsequent lysosomal degradation which leads to increased cell survival, proliferation and migration. The polypeptide is Tensin-4 (TNS4) (Homo sapiens (Human)).